The following is a 279-amino-acid chain: Tumor necrosis factor ligand superfamily member 6 (279 aa).

Over 1–78 the chain is Cytoplasmic; it reads MQQPMNYPCP…PLKKKDHNTN (78 aa). Residues 30–70 form a disordered region; that stretch reads FPCPSCGPRGPDQRRPPPPPPPVSPLPPPSQPLPLPPLTPL. A compositionally biased stretch (pro residues) spans 45-68; sequence PPPPPPPVSPLPPPSQPLPLPPLT. The helical; Signal-anchor for type II membrane protein transmembrane segment at 79-100 threads the bilayer; that stretch reads LWLPVVFFMVLVALVGMGLGMY. The Extracellular portion of the chain corresponds to 101-279; that stretch reads QLFHLQKELA…SKTFFGLYKL (179 aa). An N-linked (GlcNAc...) asparagine glycan is attached at Asn117. Residues 126-135 are compositionally biased toward polar residues; it reads EKQIANPSTP. The interval 126 to 150 is disordered; sequence EKQIANPSTPSEKKEPRSVAHLTGN. One can recognise a THD domain in the interval 143–279; the sequence is SVAHLTGNPH…SKTFFGLYKL (137 aa). Asn182 carries N-linked (GlcNAc...) asparagine glycosylation. A disulfide bridge connects residues Cys200 and Cys231. N-linked (GlcNAc...) asparagine glycans are attached at residues Asn248 and Asn258.

The protein belongs to the tumor necrosis factor family. Homotrimer. Interacts with ARHGAP9, BAIAP2L1, BTK, CACNB3, CACNB4, CRK, DLG2, DNMBP, DOCK4, EPS8L3, FGR, FYB1, FYN, HCK, ITK, ITSN2, KALRN, LYN, MACC1, MIA, MPP4, MYO15A, NCF1, NCK1, NCK2, NCKIPSD, OSTF1, PIK3R1, PSTPIP1, RIMBP3C, SAMSN1, SH3GL3, SH3PXD2B, SH3PXD2A, SH3RF2, SKAP2, SNX33, SNX9, SORBS3, SPTA1, SRC, SRGAP1, SRGAP2, SRGAP3, TEC, TJP3 and YES1. Post-translationally, the soluble form derives from the membrane form by proteolytic processing. The membrane-bound form undergoes two successive intramembrane proteolytic cleavages. The first one is processed by ADAM10 producing an N-terminal fragment, which lacks the receptor-binding extracellular domain. This ADAM10-processed FasL (FAsL APL) remnant form is still membrane anchored and further processed by SPPL2A that liberates the FasL intracellular domain (FasL ICD). FasL shedding by ADAM10 is a prerequisite for subsequent intramembrane cleavage by SPPL2A in T-cells. Phosphorylated by FGR on tyrosine residues; this is required for ubiquitination and subsequent internalization. In terms of processing, N-glycosylated. Glycosylation enhances apoptotic activity. Post-translationally, monoubiquitinated. Expressed in T-cells. Expressed in natural killer cells.

It localises to the cell membrane. The protein resides in the cytoplasmic vesicle lumen. Its subcellular location is the lysosome lumen. The protein localises to the secreted. It is found in the nucleus. In terms of biological role, cytokine that binds to TNFRSF6/FAS, a receptor that transduces the apoptotic signal into cells. Involved in cytotoxic T-cell-mediated apoptosis, natural killer cell-mediated apoptosis and in T-cell development. Initiates fratricidal/suicidal activation-induced cell death (AICD) in antigen-activated T-cells contributing to the termination of immune responses. TNFRSF6/FAS-mediated apoptosis also has a role in the induction of peripheral tolerance. Binds to TNFRSF6B/DcR3, a decoy receptor that blocks apoptosis. Induces FAS-mediated activation of NF-kappa-B, initiating non-apoptotic signaling pathways. Can induce apoptosis but does not appear to be essential for this process. Its function is as follows. Cytoplasmic form induces gene transcription inhibition. The chain is Tumor necrosis factor ligand superfamily member 6 (Faslg) from Mus musculus (Mouse).